Here is a 240-residue protein sequence, read N- to C-terminus: RNA transcription, translation and transport factor protein (240 aa).

Belongs to the RTRAF family. In terms of assembly, homodimer. Component of a tRNA-splicing ligase complex.

The protein localises to the nucleus. It is found in the cytoplasm. It localises to the cytosol. Its subcellular location is the perinuclear region. The protein resides in the cytoskeleton. The protein localises to the microtubule organizing center. It is found in the centrosome. RNA-binding protein involved in modulation of mRNA transcription by Polymerase II. Component of the tRNA-splicing ligase complex. This is RNA transcription, translation and transport factor protein from Xenopus laevis (African clawed frog).